A 429-amino-acid chain; its full sequence is Tol-Pal system protein TolB (429 aa).

The N-terminal stretch at M1 to A28 is a signal peptide.

This sequence belongs to the TolB family. In terms of assembly, the Tol-Pal system is composed of five core proteins: the inner membrane proteins TolA, TolQ and TolR, the periplasmic protein TolB and the outer membrane protein Pal. They form a network linking the inner and outer membranes and the peptidoglycan layer.

It is found in the periplasm. Its function is as follows. Part of the Tol-Pal system, which plays a role in outer membrane invagination during cell division and is important for maintaining outer membrane integrity. This chain is Tol-Pal system protein TolB, found in Polaromonas naphthalenivorans (strain CJ2).